The following is a 206-amino-acid chain: LexA repressor (206 aa).

Positions 28 to 48 (RAEIARELGFRSANAAEEHLK) form a DNA-binding region, H-T-H motif. Catalysis depends on for autocatalytic cleavage activity residues Ser-123 and Lys-160.

It belongs to the peptidase S24 family. As to quaternary structure, homodimer.

The enzyme catalyses Hydrolysis of Ala-|-Gly bond in repressor LexA.. In terms of biological role, represses a number of genes involved in the response to DNA damage (SOS response), including recA and lexA. In the presence of single-stranded DNA, RecA interacts with LexA causing an autocatalytic cleavage which disrupts the DNA-binding part of LexA, leading to derepression of the SOS regulon and eventually DNA repair. This is LexA repressor from Vibrio campbellii (strain ATCC BAA-1116).